The primary structure comprises 611 residues: Dihydroxy-acid dehydratase (611 aa).

Asp-81 contacts Mg(2+). Cys-122 is a [2Fe-2S] cluster binding site. Residues Asp-123 and Lys-124 each coordinate Mg(2+). Lys-124 bears the N6-carboxylysine mark. Cys-195 provides a ligand contact to [2Fe-2S] cluster. Glu-491 provides a ligand contact to Mg(2+). Catalysis depends on Ser-517, which acts as the Proton acceptor.

The protein belongs to the IlvD/Edd family. As to quaternary structure, homodimer. Requires [2Fe-2S] cluster as cofactor. It depends on Mg(2+) as a cofactor.

It carries out the reaction (2R)-2,3-dihydroxy-3-methylbutanoate = 3-methyl-2-oxobutanoate + H2O. The catalysed reaction is (2R,3R)-2,3-dihydroxy-3-methylpentanoate = (S)-3-methyl-2-oxopentanoate + H2O. It functions in the pathway amino-acid biosynthesis; L-isoleucine biosynthesis; L-isoleucine from 2-oxobutanoate: step 3/4. Its pathway is amino-acid biosynthesis; L-valine biosynthesis; L-valine from pyruvate: step 3/4. In terms of biological role, functions in the biosynthesis of branched-chain amino acids. Catalyzes the dehydration of (2R,3R)-2,3-dihydroxy-3-methylpentanoate (2,3-dihydroxy-3-methylvalerate) into 2-oxo-3-methylpentanoate (2-oxo-3-methylvalerate) and of (2R)-2,3-dihydroxy-3-methylbutanoate (2,3-dihydroxyisovalerate) into 2-oxo-3-methylbutanoate (2-oxoisovalerate), the penultimate precursor to L-isoleucine and L-valine, respectively. In Pasteurella multocida (strain Pm70), this protein is Dihydroxy-acid dehydratase.